A 439-amino-acid polypeptide reads, in one-letter code: Homeobox protein ceh-32 (439 aa).

The segment at residues Trp-183 to Ala-243 is a DNA-binding region (homeobox). Disordered stretches follow at residues Gly-253–Pro-293, Glu-344–Ser-365, and Val-379–Glu-439. Acidic residues-rich tracts occupy residues Ser-264–Met-274 and Glu-344–Ile-358. Residues Val-379 to Leu-392 are compositionally biased toward polar residues. Basic and acidic residues predominate over residues Val-398–His-428.

The protein belongs to the SIX/Sine oculis homeobox family. Interacts with gmn-1. Expressed in the posterior gonad. Expressed in some cells in the head that are probably neurons. Expressed in the dorsal and ventral neuron RMD pair and the inner labial neuron class IL1. Not expressed in BAG neurons.

Its subcellular location is the nucleus. In terms of biological role, transcription factor which binds a motif with the core sequence 5'-GTATCA-3'. Plays a role in head morphogenesis. Involved in embryonic development. Required for cell specification of the RIA interneurons. May cooperate with the transcription factor vab-3 and phosphatase eya-1 to repress transcription factor ets-5 expression in non BAG neuronal cells. This Caenorhabditis elegans protein is Homeobox protein ceh-32.